Consider the following 535-residue polypeptide: Calcium-dependent protein kinase 1 (535 aa).

A disordered region spans residues 1–34 (MGCNQSKSANDVRGNKVNNVNSKKKNNKREDIND). Glycine 2 carries N-myristoyl glycine lipidation. Cysteine 3 carries S-palmitoyl cysteine lipidation. The 268-residue stretch at 57–324 (YFKVRKLGSG…AEEALNSRWI (268 aa)) folds into the Protein kinase domain. ATP-binding positions include 63–71 (LGSGAYGEV) and lysine 86. Phosphoserine is present on serine 65. Serine 117 carries the post-translational modification Phosphoserine. The active-site Proton acceptor is aspartate 190. Serine 216 and serine 219 each carry phosphoserine. Threonine 230 is subject to Phosphothreonine. Serine 334 carries the post-translational modification Phosphoserine. The short motif at 345 to 352 (NMRKFEGS) is the J domain autoinhibitory motif element. The tract at residues 345-363 (NMRKFEGSQKLAQAAILFI) is j domain. The J domain interacts with the EF-hand domains signature appears at 353 to 363 (QKLAQAAILFI). EF-hand domains are found at residues 371 to 406 (EERKELTDIFKKLDKNGDGQLDKKELIEGYNVLRNF), 415 to 450 (NVEEEVDNILKEVDFDKNGYIEYSEFISVCMDKQIL), 451 to 486 (FSEERLRRAFNLFDTDKSGKITKEELANVIIRGFYF), and 497 to 532 (VSEKTWNDVLGEADQNKDNMIDFDEFVSMMHKICDN). Ca(2+) contacts are provided by aspartate 384, asparagine 386, aspartate 388, glutamine 390, glutamate 395, aspartate 428, aspartate 430, asparagine 432, tyrosine 434, glutamate 439, aspartate 464, aspartate 466, serine 468, lysine 470, glutamate 475, aspartate 510, asparagine 512, aspartate 514, methionine 516, and glutamate 521.

Belongs to the protein kinase superfamily. Ser/Thr protein kinase family. CDPK subfamily. Monomer. Mg(2+) is required as a cofactor. In terms of processing, myristoylated. Myristoylation and palmitoylation are required for the localization to the parasitophorous vacuole membrane. Palmitoylated. Palmitoylation increases in merozoites in response to low level of extracellular K(+) in the host blood. Myristoylation and palmitoylation are required for the localization to the parasitophorous vacuole membrane. Post-translationally, phosphorylation at Thr-230 may regulate CDPK1 kinase activity. Phosphorylation increases in response to an increase in intracellular Ca(2+) levels. Autophosphorylated in vitro. Autophosphorylation does not affect membrane localization in vitro.

The protein localises to the membrane. It is found in the cell membrane. The protein resides in the parasitophorous vacuole membrane. Its subcellular location is the cytoplasm. It localises to the cell projection. The protein localises to the cilium. It is found in the flagellum. The protein resides in the host cell membrane. The catalysed reaction is L-seryl-[protein] + ATP = O-phospho-L-seryl-[protein] + ADP + H(+). The enzyme catalyses L-threonyl-[protein] + ATP = O-phospho-L-threonyl-[protein] + ADP + H(+). With respect to regulation, activated by calcium. Upon calcium binding to the EF-hand domains, the C-terminus of the junction domain (J domain) undergoes a conformational change which results in the dissociation of the pseudo-substrate inhibitory motif from the catalytic domain. This, in turn may facilitate the autophosphorylation of the activation loop at Thr-230, which leads to the kinase activation. Its function is as follows. Calcium-dependent protein kinase which acts as a sensor and effector of intracellular Ca(2+) levels probably in part downstream of cGMP-activated PKG kinase. During the liver stage, involved in sporozoite motility and thus in sporozoite invasion of host hepatocytes, probably together with CDPK4 and CDPK5. In the mosquito midgut and during the last stage of male gamete exflagellation, may play a role in the rupture of the host erythrocyte membrane. In the mosquito midgut, required for the differentiation of the zygote into the ookinete by promoting the translational activation of a subset of repressed mRNAs; these mRNAs are kept repressed in the zygote by the DOZI- or CITH-containing mRNP complexes. Dispensable during the asexual blood stage. This is Calcium-dependent protein kinase 1 from Plasmodium yoelii yoelii.